The primary structure comprises 264 residues: GTP cyclohydrolase FolE2 (264 aa).

The protein belongs to the GTP cyclohydrolase IV family.

The catalysed reaction is GTP + H2O = 7,8-dihydroneopterin 3'-triphosphate + formate + H(+). It functions in the pathway cofactor biosynthesis; 7,8-dihydroneopterin triphosphate biosynthesis; 7,8-dihydroneopterin triphosphate from GTP: step 1/1. Converts GTP to 7,8-dihydroneopterin triphosphate. In Ruthia magnifica subsp. Calyptogena magnifica, this protein is GTP cyclohydrolase FolE2.